Here is a 790-residue protein sequence, read N- to C-terminus: MQVRVRLSLLLLCAVLLGSAAATSDDKTNQDDSLDSKSSLPTDESVKDHTTTGKVVAGQIFVDSEEAEVESLLQDEEDSSKTQEEEISFLESPNPSSKTYEELKRVRKPVLTAIEGTAHGEPCHFPFLFLDKEYDECTSDGREDGRLWCATTYDYKTDEKWGFCETEEDAAKRRQMQEAEMIYQAGMKILNGSNRKSQKREAYRYLQKAAGMNHTKALERVSYALLFGDYLTQNIQAAKEMFEKLTEEGSPKGQTGLGFLYASGLGVNSSQAKALVYYTFGALGGNLIAHMILGYRYWAGIGVLQSCESALTHYRLVANHVASDISLTGGSVVQRIRLPDEVENPGMNSGMLEEDLIQYYQFLAEKGDVQAQVGLGQLHLHGGRGVEQNHQRAFDYFNLAANAGNSHAMAFLGKMYSEGSDIVPQSNETALHYFKKAADMGNPVGQSGLGMAYLYGRGVQVNYDLALKYFQKAAEQGWVDGQLQLGSMYYNGIGVKRDYKQALKYFNLASQGGHILAFYNLAQMHASGTGVMRSCHTAVELFKNVCERGRWSERLMTAYNSYKDEDYNAAVVQYLLLAEQGYEVAQSNAAFILDQREATIVGENETYPRALLHWNRAASQGYTVARIKLGDYHFYGFGTDVDYETAFIHYRLASEQQHSAQAMFNLGYMHEKGLGIKQDIHLAKRFYDMAAEASPDAQVPVFLALCKLGVVYFLQYIREANIRDLFTQLDMDQLLGPEWDLYLMTIIALLLGTVIAYRQRQHQDIPVPRPPGPRPAPPQQEGPPEQQPPQ.

An N-terminal signal peptide occupies residues 1-21; it reads MQVRVRLSLLLLCAVLLGSAA. The disordered stretch occupies residues 22 to 51; the sequence is ATSDDKTNQDDSLDSKSSLPTDESVKDHTT. The Lumenal portion of the chain corresponds to 22–734; that stretch reads ATSDDKTNQD…LFTQLDMDQL (713 aa). An interaction with ERLEC1, OS9 and SYVN1 region spans residues 23–733; sequence TSDDKTNQDD…DLFTQLDMDQ (711 aa). Phosphoserine is present on serine 64. Over residues 67-78 the composition is skewed to acidic residues; that stretch reads AEVESLLQDEED. The segment at 67–98 is disordered; sequence AEVESLLQDEEDSSKTQEEEISFLESPNPSSK. Positions 118–166 constitute a Fibronectin type-II domain; that stretch reads AHGEPCHFPFLFLDKEYDECTSDGREDGRLWCATTYDYKTDEKWGFCET. 2 cysteine pairs are disulfide-bonded: cysteine 123-cysteine 149 and cysteine 137-cysteine 164. 9 Sel1-like repeats span residues 179 to 214, 215 to 250, 251 to 286, 287 to 322, 369 to 405, 406 to 442, 443 to 478, 479 to 514, and 515 to 550; these read AEMIYQAGMKILNGSNRKSQKREAYRYLQKAAGMNH, TKALERVSYALLFGDYLTQNIQAAKEMFEKLTEEGS, PKGQTGLGFLYASGLGVNSSQAKALVYYTFGALGGN, LIAHMILGYRYWAGIGVLQSCESALTHYRLVANHVA, VQAQVGLGQLHLHGGRGVEQNHQRAFDYFNLAANAGN, SHAMAFLGKMYSEGSDIVPQSNETALHYFKKAADMGN, PVGQSGLGMAYLYGRGVQVNYDLALKYFQKAAEQGW, VDGQLQLGSMYYNGIGVKRDYKQALKYFNLASQGGH, and ILAFYNLAQMHASGTGVMRSCHTAVELFKNVCERGR. 2 N-linked (GlcNAc...) asparagine glycosylation sites follow: asparagine 191 and asparagine 213. An N-linked (GlcNAc...) asparagine glycan is attached at asparagine 268. The interval 348–533 is important for homodimerization and oligomerization; that stretch reads NSGMLEEDLI…MHASGTGVMR (186 aa). Residue asparagine 427 is glycosylated (N-linked (GlcNAc...) asparagine). Residue asparagine 604 is glycosylated (N-linked (GlcNAc...) asparagine). Sel1-like repeat units lie at residues 623 to 658 and 660 to 695; these read TVARIKLGDYHFYGFGTDVDYETAFIHYRLASEQQH and AQAMFNLGYMHEKGLGIKQDIHLAKRFYDMAAEASP. An interaction with SYVN1 region spans residues 639 to 719; sequence TDVDYETAFI…VVYFLQYIRE (81 aa). A mediates retention in the endoplasmic reticulum region spans residues 734 to 790; that stretch reads LLGPEWDLYLMTIIALLLGTVIAYRQRQHQDIPVPRPPGPRPAPPQQEGPPEQQPPQ. Residues 735–755 traverse the membrane as a helical segment; it reads LGPEWDLYLMTIIALLLGTVI. The Cytoplasmic portion of the chain corresponds to 756–790; that stretch reads AYRQRQHQDIPVPRPPGPRPAPPQQEGPPEQQPPQ. The tract at residues 763–790 is disordered; that stretch reads QDIPVPRPPGPRPAPPQQEGPPEQQPPQ. Residues 767–790 are compositionally biased toward pro residues; it reads VPRPPGPRPAPPQQEGPPEQQPPQ.

It belongs to the sel-1 family. As to quaternary structure, homodimer and homooligomer. May form a complex with ERLEC1, HSPA5, OS9, and SYVN1. Interacts with FOXRED2 and EDEM1. Interacts with LPL and LMF1; may stabilize the complex formed by LPL and LMF1 and thereby promote the export of LPL dimers. Component of the HRD1 complex, which comprises at least SYNV1/HRD1, DERL1/2, FAM8A1, HERPUD1/HERP, OS9, SEL1L and UBE2J1. SYNV1 assembles with SEL1L and FAM8A1 through its transmembrane domains, but interaction with its cytoplasmic domain is required to confer stability to FAM8A1 and enhance recruitment of HERPUD1. The interaction with SYNV1/HRD1 is direct. In terms of processing, N-glycosylated. In terms of tissue distribution, highly expressed in pancreas, white adipose tissue, liver and spleen (at protein level). Detected in heart, brain, spleen, lung, liver, kidney and testis.

The protein localises to the endoplasmic reticulum membrane. Its function is as follows. Plays a role in the endoplasmic reticulum quality control (ERQC) system also called ER-associated degradation (ERAD) involved in ubiquitin-dependent degradation of misfolded endoplasmic reticulum proteins. Enhances SYVN1 stability. Plays a role in LPL maturation and secretion. Required for normal differentiation of the pancreas epithelium, and for normal exocrine function and survival of pancreatic cells. May play a role in Notch signaling. The polypeptide is Protein sel-1 homolog 1 (Sel1l) (Mus musculus (Mouse)).